Consider the following 148-residue polypeptide: Endothelial differentiation-related factor 1 (148 aa).

Ala2 carries the N-acetylalanine modification. Position 4 is a phosphoserine (Ser4). Position 25 is an N6-methyllysine (Lys25). The segment covering 33-42 has biased composition (basic and acidic residues); it reads RRGEDVETSK. A disordered region spans residues 33–66; sequence RRGEDVETSKKWAAGQNKQHSITKNTAKLDRETE. The tract at residues 37–113 is interaction with NR5A2, PPARG and NR1H3; sequence DVETSKKWAA…QVIADYESGR (77 aa). Positions 48–58 are enriched in polar residues; that stretch reads QNKQHSITKNT. Residues 69-108 form an interaction with TBP and NR5A1 region; sequence HHDRVTLEVGKVIQQGRQSKGLTQKDLATKINEKPQVIAD. The IQ motif motif lies at 81 to 88; it reads IQQGRQSK. The HTH cro/C1-type domain maps to 81–135; it reads IQQGRQSKGLTQKDLATKINEKPQVIADYESGRAIPNNQVLGKIERAIGLKLRGK. A DNA-binding region (H-T-H motif) is located at residues 92 to 111; it reads QKDLATKINEKPQVIADYES.

In terms of assembly, interacts with TBP and the transcription factor IID (TFIID) complex, NR5A2, NR1H3 and PPARG. Interaction with TBP is regulated by phosphorylation. Binds NR5A1, ATF1, FOS and JUN via their conserved basic region. Binding to calmodulin is regulated by calcium and phosphorylation of the IQ motif. Phosphorylated (by PKA and PKC). Expressed in brain, liver, lung, kidney and heart (at protein level). Ubiquitously expressed. More abundant in heart, pancreas, liver, intestine and adipose tissues.

The protein localises to the cytoplasm. It localises to the nucleus. Its function is as follows. Transcriptional coactivator stimulating NR5A1 and ligand-dependent NR1H3/LXRA and PPARG transcriptional activities. Enhances the DNA-binding activity of ATF1, ATF2, CREB1 and NR5A1. Regulates nitric oxid synthase activity probably by sequestering calmodulin in the cytoplasm. May function in endothelial cells differentiation, hormone-induced cardiomyocytes hypertrophy and lipid metabolism. In Homo sapiens (Human), this protein is Endothelial differentiation-related factor 1 (EDF1).